We begin with the raw amino-acid sequence, 450 residues long: Exodeoxyribonuclease 7 large subunit (450 aa).

Belongs to the XseA family. As to quaternary structure, heterooligomer composed of large and small subunits.

The protein localises to the cytoplasm. The catalysed reaction is Exonucleolytic cleavage in either 5'- to 3'- or 3'- to 5'-direction to yield nucleoside 5'-phosphates.. Its function is as follows. Bidirectionally degrades single-stranded DNA into large acid-insoluble oligonucleotides, which are then degraded further into small acid-soluble oligonucleotides. This chain is Exodeoxyribonuclease 7 large subunit, found in Listeria monocytogenes serovar 1/2a (strain ATCC BAA-679 / EGD-e).